We begin with the raw amino-acid sequence, 246 residues long: Acetoacetate decarboxylase (246 aa).

Lysine 116 serves as the catalytic Schiff-base intermediate with acetoacetate.

The protein belongs to the ADC family.

The enzyme catalyses acetoacetate + H(+) = acetone + CO2. In terms of biological role, catalyzes the conversion of acetoacetate to acetone and carbon dioxide. This chain is Acetoacetate decarboxylase, found in Burkholderia cenocepacia (strain HI2424).